A 462-amino-acid chain; its full sequence is Gamma-aminobutyric acid receptor subunit alpha-5 (462 aa).

The signal sequence occupies residues 1–31; that stretch reads MDNGMFSGFIMIKNLLLFCISMNLSSHFGFS. Over 32-260 the chain is Extracellular; that stretch reads QMPTSSVKDE…FHLKRKIGYF (229 aa). Residue Asn45 is glycosylated (N-linked (GlcNAc...) asparagine). Arg101 is a binding site for 4-aminobutanoate. The N-linked (GlcNAc...) asparagine glycan is linked to Asn145. Thr164 lines the 4-aminobutanoate pocket. A disulfide bridge links Cys173 with Cys187. Residues Asn207 and Asn236 are each glycosylated (N-linked (GlcNAc...) asparagine). A helical transmembrane segment spans residues 261 to 281; the sequence is VIQTYLPCIMTVILSQVSFWL. The Cytoplasmic segment spans residues 282-286; that stretch reads NRESV. The helical transmembrane segment at 287–308 threads the bilayer; that stretch reads PARTVFGVTTVLTMTTLSISAR. Residues 309-318 lie on the Extracellular side of the membrane; that stretch reads NSLPKVAYAT. Residues 319–340 traverse the membrane as a helical segment; that stretch reads AMDWFIAVCYAFVFSALIEFAT. Topologically, residues 341-427 are cytoplasmic; it reads VNYFTKRGWA…TYNSISKIDK (87 aa). Lys355 participates in a covalent cross-link: Glycyl lysine isopeptide (Lys-Gly) (interchain with G-Cter in ubiquitin). Residues 377–412 are disordered; sequence FTTGKMSHPPNIPKEQTPAGTSNTTSVSVKPSEEKT. The chain crosses the membrane as a helical span at residues 428-448; that stretch reads MSRIVFPVLFGTFNLVYWATY. Residues 449–462 are Extracellular-facing; that stretch reads LNREPVIKGAASPK.

The protein belongs to the ligand-gated ion channel (TC 1.A.9) family. Gamma-aminobutyric acid receptor (TC 1.A.9.5) subfamily. GABRA5 sub-subfamily. In terms of assembly, heteropentamer, formed by a combination of alpha (GABRA1-6), beta (GABRB1-3), gamma (GABRG1-3), delta (GABRD), epsilon (GABRE), rho (GABRR1-3), pi (GABRP) and theta (GABRQ) chains, each subunit exhibiting distinct physiological and pharmacological properties.

Its subcellular location is the postsynaptic cell membrane. It localises to the cell membrane. The enzyme catalyses chloride(in) = chloride(out). Alpha subunit of the heteropentameric ligand-gated chloride channel gated by gamma-aminobutyric acid (GABA), a major inhibitory neurotransmitter in the brain. GABA-gated chloride channels, also named GABA(A) receptors (GABAAR), consist of five subunits arranged around a central pore and contain GABA active binding site(s) located at the alpha and beta subunit interface(s). When activated by GABA, GABAARs selectively allow the flow of chloride anions across the cell membrane down their electrochemical gradient. GABAARs containing alpha-5/GABRA5 subunits are mainly extrasynaptic and contribute to the tonic GABAergic inhibition in the hippocampus. Extrasynaptic alpha-5-containing GABAARs in CA1 pyramidal neurons play a role in learning and memory processes. This Homo sapiens (Human) protein is Gamma-aminobutyric acid receptor subunit alpha-5.